Consider the following 210-residue polypeptide: Oxygen-insensitive NADPH nitroreductase (210 aa).

Glycine 150–glycine 155 is an NADP(+) binding site.

This sequence belongs to the nitroreductase family.

Its function is as follows. Reduction of a variety of nitroaromatic compounds using NADPH as source of reducing equivalents; two electrons are transferred. This chain is Oxygen-insensitive NADPH nitroreductase (rdxA), found in Helicobacter acinonychis (strain Sheeba).